We begin with the raw amino-acid sequence, 230 residues long: tRNA (cytidine-2'-O-)-methyltransferase TrmJ (230 aa).

S-adenosyl-L-methionine-binding positions include 79-81 (TSG), Gly-115, Ile-135, and 142-144 (PIM).

It belongs to the class IV-like SAM-binding methyltransferase superfamily. RNA methyltransferase TrmH family. In terms of assembly, homodimer.

It is found in the cytoplasm. The catalysed reaction is cytidine(32) in tRNA + S-adenosyl-L-methionine = 2'-O-methylcytidine(32) in tRNA + S-adenosyl-L-homocysteine + H(+). In terms of biological role, catalyzes the formation of 2'O-methylated cytidine (Cm32) at position 32 in tRNA. This is tRNA (cytidine-2'-O-)-methyltransferase TrmJ from Methanocaldococcus jannaschii (strain ATCC 43067 / DSM 2661 / JAL-1 / JCM 10045 / NBRC 100440) (Methanococcus jannaschii).